We begin with the raw amino-acid sequence, 474 residues long: Gamma-aminobutyric acid receptor subunit beta-1 (474 aa).

Positions 1–25 (MWTVQNRESLGLLSFPVMIAMVCCA) are cleaved as a signal peptide. Over 26 to 245 (HSANEPSNMS…SFRLKRNIGY (220 aa)) the chain is Extracellular. 2 N-linked (GlcNAc...) asparagine glycosylation sites follow: Asn-33 and Asn-105. Tyr-122 contacts histamine. A disulfide bridge links Cys-161 with Cys-175. Asn-174 is a glycosylation site (N-linked (GlcNAc...) asparagine). Histamine contacts are provided by residues 181-182 (SY) and Thr-227. 4-aminobutanoate-binding residues include Tyr-182 and Thr-227. The next 3 membrane-spanning stretches (helical) occupy residues 246-267 (FILQ…SFWI), 271-293 (ASAA…STHL), and 305-327 (AIDI…YAFV). Topologically, residues 328–451 (NYIFFGKGPQ…DLTDVNSIDK (124 aa)) are cytoplasmic. A helical membrane pass occupies residues 452–473 (WSRMFFPITFSLFNVVYWLYYV).

This sequence belongs to the ligand-gated ion channel (TC 1.A.9) family. Gamma-aminobutyric acid receptor (TC 1.A.9.5) subfamily. GABRB1 sub-subfamily. In terms of assembly, heteropentamer, formed by a combination of alpha (GABRA1-6), beta (GABRB1-3), gamma (GABRG1-3), delta (GABRD), epsilon (GABRE), rho (GABRR1-3), pi (GABRP) and theta (GABRQ) chains, each subunit exhibiting distinct physiological and pharmacological properties. Binds UBQLN1.

The protein resides in the postsynaptic cell membrane. It localises to the cell membrane. It carries out the reaction chloride(in) = chloride(out). Its activity is regulated as follows. Potentiated by histamine. Its function is as follows. Beta subunit of the heteropentameric ligand-gated chloride channel gated by gamma-aminobutyric acid (GABA), a major inhibitory neurotransmitter in the brain. GABA-gated chloride channels, also named GABA(A) receptors (GABAAR), consist of five subunits arranged around a central pore and contain GABA active binding site(s) located at the alpha and beta subunit interface(s). When activated by GABA, GABAARs selectively allow the flow of chloride anions across the cell membrane down their electrochemical gradient. Chloride influx into the postsynaptic neuron following GABAAR opening decreases the neuron ability to generate a new action potential, thereby reducing nerve transmission. Beta-containing GABAARs can simultaneously bind GABA and histamine where histamine binds at the interface of two neighboring beta subunits, which may be involved in the regulation of sleep and wakefulness. In Bos taurus (Bovine), this protein is Gamma-aminobutyric acid receptor subunit beta-1 (GABRB1).